A 38-amino-acid polypeptide reads, in one-letter code: Potassium channel toxin alpha-KTx 3.7 (38 aa).

Intrachain disulfides connect cysteine 8/cysteine 28, cysteine 14/cysteine 33, and cysteine 18/cysteine 35.

Belongs to the short scorpion toxin superfamily. Potassium channel inhibitor family. Alpha-KTx 03 subfamily. In terms of tissue distribution, expressed by the venom gland.

Its subcellular location is the secreted. Blocks voltage-gated potassium channels Kv1.1/KCNA1 (IC(50)=0.6 nM), Kv1.2/KCNA2 (IC(50)=5.4 nM), Kv1.3/KCNA3 (IC(50)=0.014 nM) potently, and moderately block intermediate conductance calcium-activated potassium channels KCa3.1/KCNN4 (IC(50)=225 nM). Also shows activity on muscle-type nicotinic acetylcholine receptor (nAChR), since it reversibly and dose-dependently inhibits acetylcholine-induced current through mouse muscle-type nAChR heterologously expressed in Xenopus oocytes (IC(50)=1.6 uM). This is Potassium channel toxin alpha-KTx 3.7 from Orthochirus scrobiculosus (Central Asian scorpion).